A 269-amino-acid polypeptide reads, in one-letter code: Formamidopyrimidine-DNA glycosylase (269 aa).

Residue P2 is the Schiff-base intermediate with DNA of the active site. E3 serves as the catalytic Proton donor. K57 acts as the Proton donor; for beta-elimination activity in catalysis. H90, R109, and K150 together coordinate DNA. Residues 235–269 (QVYGRKGEPCRVCGTPIVATKHAQRATFYCRQCQK) form an FPG-type zinc finger. R259 acts as the Proton donor; for delta-elimination activity in catalysis.

It belongs to the FPG family. Monomer. The cofactor is Zn(2+).

It carries out the reaction Hydrolysis of DNA containing ring-opened 7-methylguanine residues, releasing 2,6-diamino-4-hydroxy-5-(N-methyl)formamidopyrimidine.. The enzyme catalyses 2'-deoxyribonucleotide-(2'-deoxyribose 5'-phosphate)-2'-deoxyribonucleotide-DNA = a 3'-end 2'-deoxyribonucleotide-(2,3-dehydro-2,3-deoxyribose 5'-phosphate)-DNA + a 5'-end 5'-phospho-2'-deoxyribonucleoside-DNA + H(+). Its function is as follows. Involved in base excision repair of DNA damaged by oxidation or by mutagenic agents. Acts as a DNA glycosylase that recognizes and removes damaged bases. Has a preference for oxidized purines, such as 7,8-dihydro-8-oxoguanine (8-oxoG). Has AP (apurinic/apyrimidinic) lyase activity and introduces nicks in the DNA strand. Cleaves the DNA backbone by beta-delta elimination to generate a single-strand break at the site of the removed base with both 3'- and 5'-phosphates. This is Formamidopyrimidine-DNA glycosylase from Escherichia coli O6:K15:H31 (strain 536 / UPEC).